The sequence spans 1103 residues: A disintegrin and metalloproteinase with thrombospondin motifs 10 (1103 aa).

Positions 1–25 are cleaved as a signal peptide; it reads MAPACQILRWALALGLGLMFEVTHA. The propeptide occupies 26–233; it reads FRSQDEFLSS…TERGQPGLKR (208 aa). 3 N-linked (GlcNAc...) asparagine glycosylation sites follow: asparagine 90, asparagine 222, and asparagine 323. A disordered region spans residues 213 to 233; it reads KPPPARPLGNETERGQPGLKR. In terms of domain architecture, Peptidase M12B spans 239-457; the sequence is RYVETLVVAD…GLGLCLNNRP (219 aa). 11 disulfide bridges follow: cysteine 315–cysteine 376, cysteine 351–cysteine 358, cysteine 370–cysteine 452, cysteine 409–cysteine 436, cysteine 479–cysteine 501, cysteine 490–cysteine 508, cysteine 496–cysteine 531, cysteine 521–cysteine 536, cysteine 559–cysteine 596, cysteine 563–cysteine 601, and cysteine 574–cysteine 586. Histidine 392 contributes to the Zn(2+) binding site. Glutamate 393 is a catalytic residue. The Zn(2+) site is built by histidine 396 and histidine 402. The Disintegrin domain maps to 460 to 546; it reads QDFVYPTVAP…VPFGSRPEGV (87 aa). Residues 547 to 602 form the TSP type-1 1 domain; sequence DGAWGPWTPWGDCSRTCGGGVSSSSRHCDSPRPTIGGKYCLGERRRHRSCNTDDCP. Residues 706-828 form a spacer region; sequence ETIEGVFSPA…IARDSLPPYS (123 aa). Asparagine 740 and asparagine 795 each carry an N-linked (GlcNAc...) asparagine glycan. TSP type-1 domains are found at residues 825–883, 884–945, 947–1001, and 1003–1058; these read PPYS…NTEP, CPPD…PTCP, EWAA…NLRR, and PPAR…AKCD. Residue asparagine 892 is glycosylated (N-linked (GlcNAc...) asparagine). The PLAC domain maps to 1065–1103; that stretch reads GPEECKDVNKVAYCPLVLKFQFCSRAYFRQMCCKTCHGH.

Interacts with FBN1; this interaction promotes microfibrils assembly. It depends on Zn(2+) as a cofactor. Glycosylated. Can be O-fucosylated by POFUT2 on a serine or a threonine residue found within the consensus sequence C1-X(2)-(S/T)-C2-G of the TSP type-1 repeat domains where C1 and C2 are the first and second cysteine residue of the repeat, respectively. Fucosylated repeats can then be further glycosylated by the addition of a beta-1,3-glucose residue by the glucosyltransferase, B3GALTL. Fucosylation mediates the efficient secretion of ADAMTS family members. Can also be C-glycosylated with one or two mannose molecules on tryptophan residues within the consensus sequence W-X-X-W of the TPRs, and N-glycosylated. These other glycosylations can also facilitate secretion. As to expression, widely expressed in adult tissues.

It localises to the secreted. Its subcellular location is the extracellular space. The protein localises to the extracellular matrix. In terms of biological role, metalloprotease that participate in microfibrils assembly. Microfibrils are extracellular matrix components occurring independently or along with elastin in the formation of elastic tissues. The protein is A disintegrin and metalloproteinase with thrombospondin motifs 10 (ADAMTS10) of Homo sapiens (Human).